A 612-amino-acid chain; its full sequence is Beta-mannosyltransferase 5 (612 aa).

The Cytoplasmic segment spans residues 1 to 12 (MVQKQYRFAPKS). A helical membrane pass occupies residues 13-33 (IFTFVFLCFVAIVVIISTSSL). The Extracellular segment spans residues 34–612 (VQVEESLDPI…YRAHLKRWQN (579 aa)). N-linked (GlcNAc...) asparagine glycans are attached at residues Asn-224, Asn-230, and Asn-480.

The protein belongs to the BMT family.

It localises to the membrane. Beta-mannosyltransferase involved in cell wall biosynthesis. Required for beta-1,2-mannose transfer on phospholipomannan. This chain is Beta-mannosyltransferase 5 (BMT5), found in Candida albicans (strain SC5314 / ATCC MYA-2876) (Yeast).